Here is a 246-residue protein sequence, read N- to C-terminus: NLP effector protein 2 (246 aa).

Residues 1-19 (MKFVVFLCAIAAVVATIQG) form the signal peptide. Residues 113-123 (AIMYSWYFPKD) carry the Conserved undecapeptide motif I motif. Residues 130 to 136 (GHRHDWE) carry the Hepta-peptide GHRHDWE motif II motif.

The protein belongs to the Necrosis inducing protein (NPP1) family.

It is found in the secreted. In terms of biological role, secreted effector that contributes strongly to virulence during infection by P.capsici. Causes large necrotic areas in both host C.annuum and non-host N.benthamiana. This chain is NLP effector protein 2, found in Phytophthora capsici.